A 1054-amino-acid polypeptide reads, in one-letter code: Disks large-associated protein 2 (1054 aa).

Disordered stretches follow at residues 32–87 (EPEE…SGSR) and 242–301 (SHSL…SDDN). The span at 242 to 255 (SHSLEGSSKSNANG) shows a compositional bias: polar residues. Positions 267–281 (HAHHAKHSKRSKSKE) are enriched in basic residues. Over residues 289–299 (RPGMSSWWSSD) the composition is skewed to low complexity. Phosphoserine is present on residues serine 298, serine 304, serine 386, and serine 452. Disordered stretches follow at residues 442-464 (GDEE…ILPE) and 609-666 (YKKT…TDSL). Polar residues predominate over residues 628–641 (VTAQSSTESTQDAY). Phosphoserine occurs at positions 662, 665, 668, and 715. The segment at 719-746 (QDSEFPEHQPYPRSDVETATDSDTESRG) is disordered. Threonine 738 carries the post-translational modification Phosphothreonine. A phosphoserine mark is found at serine 740, serine 771, serine 806, serine 978, and serine 1007. Composition is skewed to basic and acidic residues over residues 977–987 (ESPERKEERKV) and 1002–1020 (ITRE…EARR). The interval 977-1021 (ESPERKEERKVPPPIPKKPPKGKFPITREKSLDLPDRQRQEARRR) is disordered.

Belongs to the SAPAP family. As to quaternary structure, interacts with DLG1 and DLG4/PSD-95. Expressed in brain and kidney.

The protein resides in the cell membrane. It localises to the postsynaptic density. The protein localises to the synapse. May play a role in the molecular organization of synapses and neuronal cell signaling. Could be an adapter protein linking ion channel to the subsynaptic cytoskeleton. May induce enrichment of PSD-95/SAP90 at the plasma membrane. The chain is Disks large-associated protein 2 from Homo sapiens (Human).